We begin with the raw amino-acid sequence, 57 residues long: uncharacterized protein (57 aa).

Residues 26–57 form a disordered region; that stretch reads VVSTRKRLKQNTNTPPHYDTSEDEDEDNYYNY. The span at 46–57 shows a compositional bias: acidic residues; the sequence is SEDEDEDNYYNY.

This is an uncharacterized protein from Autographa californica nuclear polyhedrosis virus (AcMNPV).